The primary structure comprises 562 residues: Dihydroxy-acid dehydratase (562 aa).

Cys-55 contributes to the [2Fe-2S] cluster binding site. Asp-87 serves as a coordination point for Mg(2+). Cys-128 is a [2Fe-2S] cluster binding site. Positions 129 and 130 each coordinate Mg(2+). Lys-130 is subject to N6-carboxylysine. Position 200 (Cys-200) interacts with [2Fe-2S] cluster. A Mg(2+)-binding site is contributed by Glu-451. Ser-477 acts as the Proton acceptor in catalysis.

The protein belongs to the IlvD/Edd family. As to quaternary structure, homodimer. [2Fe-2S] cluster serves as cofactor. It depends on Mg(2+) as a cofactor.

It carries out the reaction (2R)-2,3-dihydroxy-3-methylbutanoate = 3-methyl-2-oxobutanoate + H2O. The enzyme catalyses (2R,3R)-2,3-dihydroxy-3-methylpentanoate = (S)-3-methyl-2-oxopentanoate + H2O. It functions in the pathway amino-acid biosynthesis; L-isoleucine biosynthesis; L-isoleucine from 2-oxobutanoate: step 3/4. Its pathway is amino-acid biosynthesis; L-valine biosynthesis; L-valine from pyruvate: step 3/4. In terms of biological role, functions in the biosynthesis of branched-chain amino acids. Catalyzes the dehydration of (2R,3R)-2,3-dihydroxy-3-methylpentanoate (2,3-dihydroxy-3-methylvalerate) into 2-oxo-3-methylpentanoate (2-oxo-3-methylvalerate) and of (2R)-2,3-dihydroxy-3-methylbutanoate (2,3-dihydroxyisovalerate) into 2-oxo-3-methylbutanoate (2-oxoisovalerate), the penultimate precursor to L-isoleucine and L-valine, respectively. The chain is Dihydroxy-acid dehydratase from Cytophaga hutchinsonii (strain ATCC 33406 / DSM 1761 / CIP 103989 / NBRC 15051 / NCIMB 9469 / D465).